Here is a 345-residue protein sequence, read N- to C-terminus: Phosphoribosylformylglycinamidine cyclo-ligase (345 aa).

Belongs to the AIR synthase family.

It is found in the cytoplasm. It catalyses the reaction 2-formamido-N(1)-(5-O-phospho-beta-D-ribosyl)acetamidine + ATP = 5-amino-1-(5-phospho-beta-D-ribosyl)imidazole + ADP + phosphate + H(+). It functions in the pathway purine metabolism; IMP biosynthesis via de novo pathway; 5-amino-1-(5-phospho-D-ribosyl)imidazole from N(2)-formyl-N(1)-(5-phospho-D-ribosyl)glycinamide: step 2/2. This Salmonella typhimurium (strain LT2 / SGSC1412 / ATCC 700720) protein is Phosphoribosylformylglycinamidine cyclo-ligase.